We begin with the raw amino-acid sequence, 249 residues long: UPF0246 protein EUBREC_1226 (249 aa).

Belongs to the UPF0246 family.

This Agathobacter rectalis (strain ATCC 33656 / DSM 3377 / JCM 17463 / KCTC 5835 / VPI 0990) (Eubacterium rectale) protein is UPF0246 protein EUBREC_1226.